Reading from the N-terminus, the 845-residue chain is Meiotically up-regulated gene 4 protein (845 aa).

The interval Leu122–Pro158 is disordered. Over residues Pro132 to Ser145 the composition is skewed to low complexity. The chain crosses the membrane as a helical span at residues Phe726 to Pro746.

Its subcellular location is the membrane. In terms of biological role, has a role in meiosis. This Schizosaccharomyces pombe (strain 972 / ATCC 24843) (Fission yeast) protein is Meiotically up-regulated gene 4 protein (mug4).